Consider the following 376-residue polypeptide: MARPKLHDFRRLVVKVGSSLLIDSGAGEVRADWLAALAADIAELHRGGRDVMIVSSGSIALGRSRLKLPRGALKLEESQAAAAVGQIALARTWSEVLGSHGIGAGQILVTLQDTEERRRYLNARSTIAKLLEWRAVPVINENDTVATNEIRYGDNDRLAARVATMASADLLILLSDIDGLYTAPPGSNPDAKLIPEVESVTAEIESMAGAAGSELSRGGMRTKIEAAKIATSAGTHMLIASGKIDHPLKAIAEGGPCTWFLTPANPVTARKRWIAGSLEPKGTLTIDAGAVSALRAGKSLLPAGVIRVDGQFARGDAVIVRGPDTHEIGRGLVAYDADDADRIKGRSSPDVMMILGISGRAEMIHRDDLVVGTAPG.

Residue K15 coordinates ATP. Residues S56, D143, and N155 each coordinate substrate. An ATP-binding site is contributed by 175–176 (SD). One can recognise a PUA domain in the interval 281 to 358 (KGTLTIDAGA…PDVMMILGIS (78 aa)).

This sequence belongs to the glutamate 5-kinase family.

The protein localises to the cytoplasm. It catalyses the reaction L-glutamate + ATP = L-glutamyl 5-phosphate + ADP. It participates in amino-acid biosynthesis; L-proline biosynthesis; L-glutamate 5-semialdehyde from L-glutamate: step 1/2. In terms of biological role, catalyzes the transfer of a phosphate group to glutamate to form L-glutamate 5-phosphate. The sequence is that of Glutamate 5-kinase from Rhodopseudomonas palustris (strain BisB5).